Consider the following 61-residue polypeptide: Small ribosomal subunit protein uS14 (61 aa).

Residues C24, C27, C40, and C43 each coordinate Zn(2+).

It belongs to the universal ribosomal protein uS14 family. Zinc-binding uS14 subfamily. Part of the 30S ribosomal subunit. Contacts proteins S3 and S10. The cofactor is Zn(2+).

Binds 16S rRNA, required for the assembly of 30S particles and may also be responsible for determining the conformation of the 16S rRNA at the A site. The sequence is that of Small ribosomal subunit protein uS14 from Geobacillus stearothermophilus (Bacillus stearothermophilus).